We begin with the raw amino-acid sequence, 310 residues long: ADP-L-glycero-D-manno-heptose-6-epimerase (310 aa).

Residues 10–11 (FI), 31–32 (DN), lysine 38, lysine 53, 75–79 (EGACS), and asparagine 92 each bind NADP(+). Tyrosine 140 functions as the Proton acceptor in the catalytic mechanism. Lysine 144 contributes to the NADP(+) binding site. Substrate is bound at residue asparagine 169. NADP(+) contacts are provided by valine 170 and lysine 178. Lysine 178 functions as the Proton acceptor in the catalytic mechanism. Residues serine 180, histidine 187, 201–204 (FSGS), arginine 209, and tyrosine 272 each bind substrate.

The protein belongs to the NAD(P)-dependent epimerase/dehydratase family. HldD subfamily. Homopentamer. It depends on NADP(+) as a cofactor.

It catalyses the reaction ADP-D-glycero-beta-D-manno-heptose = ADP-L-glycero-beta-D-manno-heptose. It functions in the pathway nucleotide-sugar biosynthesis; ADP-L-glycero-beta-D-manno-heptose biosynthesis; ADP-L-glycero-beta-D-manno-heptose from D-glycero-beta-D-manno-heptose 7-phosphate: step 4/4. Catalyzes the interconversion between ADP-D-glycero-beta-D-manno-heptose and ADP-L-glycero-beta-D-manno-heptose via an epimerization at carbon 6 of the heptose. This is ADP-L-glycero-D-manno-heptose-6-epimerase from Pectobacterium atrosepticum (strain SCRI 1043 / ATCC BAA-672) (Erwinia carotovora subsp. atroseptica).